Consider the following 466-residue polypeptide: 3-isopropylmalate dehydratase large subunit (466 aa).

[4Fe-4S] cluster is bound by residues cysteine 347, cysteine 407, and cysteine 410.

Belongs to the aconitase/IPM isomerase family. LeuC type 1 subfamily. Heterodimer of LeuC and LeuD. The cofactor is [4Fe-4S] cluster.

It catalyses the reaction (2R,3S)-3-isopropylmalate = (2S)-2-isopropylmalate. It functions in the pathway amino-acid biosynthesis; L-leucine biosynthesis; L-leucine from 3-methyl-2-oxobutanoate: step 2/4. Its function is as follows. Catalyzes the isomerization between 2-isopropylmalate and 3-isopropylmalate, via the formation of 2-isopropylmaleate. This chain is 3-isopropylmalate dehydratase large subunit, found in Shigella dysenteriae serotype 1 (strain Sd197).